Consider the following 301-residue polypeptide: Homoserine O-acetyltransferase (301 aa).

The active-site Acyl-thioester intermediate is the Cys142. Lys163 and Ser192 together coordinate substrate. His235 serves as the catalytic Proton acceptor. The active site involves Glu237. Arg249 provides a ligand contact to substrate.

The protein belongs to the MetA family.

It localises to the cytoplasm. It carries out the reaction L-homoserine + acetyl-CoA = O-acetyl-L-homoserine + CoA. It functions in the pathway amino-acid biosynthesis; L-methionine biosynthesis via de novo pathway; O-acetyl-L-homoserine from L-homoserine: step 1/1. Its function is as follows. Transfers an acetyl group from acetyl-CoA to L-homoserine, forming acetyl-L-homoserine. This Bacillus mycoides (strain KBAB4) (Bacillus weihenstephanensis) protein is Homoserine O-acetyltransferase.